The primary structure comprises 311 residues: Tyrosine recombinase XerD (311 aa).

Residues 2–95 enclose the Core-binding (CB) domain; sequence KTLALQLQGY…AVRGLHRFAA (94 aa). The Tyr recombinase domain maps to 116–304; the sequence is RLPKSLTIDE…TVHALREVWA (189 aa). Active-site residues include Arg160, Lys184, His256, Arg259, and His282. The active-site O-(3'-phospho-DNA)-tyrosine intermediate is Tyr291.

Belongs to the 'phage' integrase family. XerD subfamily. Forms a cyclic heterotetrameric complex composed of two molecules of XerC and two molecules of XerD.

It is found in the cytoplasm. In terms of biological role, site-specific tyrosine recombinase, which acts by catalyzing the cutting and rejoining of the recombining DNA molecules. The XerC-XerD complex is essential to convert dimers of the bacterial chromosome into monomers to permit their segregation at cell division. It also contributes to the segregational stability of plasmids. In Mycobacterium tuberculosis (strain CDC 1551 / Oshkosh), this protein is Tyrosine recombinase XerD.